Consider the following 503-residue polypeptide: Trehalose-6-phosphate synthase (503 aa).

Polar residues predominate over residues 1–14 (MTDQSGNGVRSGSA). Positions 1 to 20 (MTDQSGNGVRSGSASEAPPS) are disordered. Arg-31 provides a ligand contact to D-glucose 6-phosphate. A UDP-alpha-D-glucose-binding site is contributed by 51 to 52 (GG). Tyr-109 and Asp-163 together coordinate D-glucose 6-phosphate. Arg-305 and Lys-310 together coordinate UDP-alpha-D-glucose. Residue Arg-343 participates in D-glucose 6-phosphate binding. 408 to 412 (LVAKE) contacts UDP-alpha-D-glucose.

Belongs to the glycosyltransferase 20 family. In terms of assembly, homotetramer.

The catalysed reaction is ADP-alpha-D-glucose + D-glucose 6-phosphate = alpha,alpha-trehalose 6-phosphate + ADP + H(+). The enzyme catalyses CDP-alpha-D-glucose + D-glucose 6-phosphate = alpha,alpha-trehalose 6-phosphate + CDP + H(+). It carries out the reaction GDP-alpha-D-glucose + D-glucose 6-phosphate = alpha,alpha-trehalose 6-phosphate + GDP + H(+). It catalyses the reaction TDP-alpha-D-glucose + D-glucose 6-phosphate = 5-methyl-UDP + alpha,alpha-trehalose 6-phosphate + H(+). The catalysed reaction is D-glucose 6-phosphate + UDP-alpha-D-glucose = alpha,alpha-trehalose 6-phosphate + UDP + H(+). It participates in glycan biosynthesis; trehalose biosynthesis. In terms of biological role, probably involved in the osmoprotection via the biosynthesis of trehalose and in the production of glycogen and alpha-glucan via the TreS-Pep2 branch involved in the biosynthesis of maltose-1-phosphate (M1P). Catalyzes the transfer of glucose from UDP-glucose (UDP-Glc) to D-glucose 6-phosphate (Glc-6-P) to form trehalose-6-phosphate. Probably also able to use ADP-Glc, CDP-Glc, GDP-Glc and TDP-Glc as glucosyl donors. The chain is Trehalose-6-phosphate synthase from Mycolicibacterium gilvum (strain PYR-GCK) (Mycobacterium gilvum (strain PYR-GCK)).